We begin with the raw amino-acid sequence, 338 residues long: tRNA pseudouridine synthase D (338 aa).

Aspartate 79 acts as the Nucleophile in catalysis. Residues 154–303 form the TRUD domain; the sequence is GVPNYFGEQR…EEAWRANILY (150 aa).

It belongs to the pseudouridine synthase TruD family.

The catalysed reaction is uridine(13) in tRNA = pseudouridine(13) in tRNA. Functionally, responsible for synthesis of pseudouridine from uracil-13 in transfer RNAs. This chain is tRNA pseudouridine synthase D, found in Legionella pneumophila (strain Corby).